Reading from the N-terminus, the 340-residue chain is Short-chain dehydrogenase/reductase ffsI (340 aa).

6 residues coordinate NADP(+): Leu-46, Arg-71, Asp-96, Asn-123, Tyr-211, and Lys-215. Residue Tyr-211 is the Proton acceptor of the active site. Lys-215 functions as the Lowers pKa of active site Tyr in the catalytic mechanism.

This sequence belongs to the short-chain dehydrogenases/reductases (SDR) family.

The protein operates within mycotoxin biosynthesis. Functionally, short-chain dehydrogenase/reductase; part of the gene cluster that mediates the biosynthesis of the cytotoxic leucine-containing cytochalasans, including aspochalasin C, aspochalasin E, TMC-169, flavichalasine F, aspergillin PZ, aspochalasin M and flavichalasine G. The first step in the pathway is catalyzed by the hybrid PKS-NRPS ffsA that utilizes 8 units of malonyl-CoA to iteratively assemble the octaketide chain before addition of L-leucine by the C-terminal NRPS modules. Because ffsA lacks a designated enoylreductase (ER) domain, the required activity is provided the enoyl reductase fssC. The methyltransferase (MT) domain of ffsA catalyzes the alpha-methylation at C10 and C14 using S-adenosyl-L-methionine as the methyl-donating cosubstrate. Reduction by the hydrolyase ffsE, followed by dehydration and intra-molecular Diels-Alder cyclization by the Diels-Alderase ffsF then yield the required isoindolone-fused macrocycle. A number of oxidative steps catalyzed by the tailoring cytochrome P450 monooxygenase ffsD, the FAD-linked oxidoreductase ffsJ and the short-chain dehydrogenase/reductase ffsI, are further required to afford the final products. This Aspergillus flavipes protein is Short-chain dehydrogenase/reductase ffsI.